The following is a 209-amino-acid chain: Cerebral peptide 1 (209 aa).

The signal sequence occupies residues 1–20; that stretch reads MLLAKISVVVLLLAIDGTSS. Residues 21 to 39 show a composition bias toward polar residues; it reads SESTDNVVLSSSPDSQKAA. The propeptide at 21 to 43 is connecting peptide 1; the sequence is SESTDNVVLSSSPDSQKAATSRH. Residues 21-56 form a disordered region; that stretch reads SESTDNVVLSSSPDSQKAATSRHKRAPGWGKRSSLN. W49 is modified (tryptophan amide). The propeptide at 53-77 is connecting peptide 2; sequence SSLNDEDLFADSDSAQELLDSVAAL. Tryptophan amide is present on residues W83 and W105. The disordered stretch occupies residues 98-169; that stretch reads EAKRAPGWGK…APGWGKRSGG (72 aa). Positions 109-122 are cleaved as a propeptide — connecting peptide 4; the sequence is GQEIDVDEDGSEQE. 6 positions are modified to tryptophan amide: W128, W135, W142, W149, W156, and W163. Residues 167 to 191 constitute a propeptide, connecting peptide 5; the sequence is SGGDYCETLEKMVDAYIYKAVEVDS. An intrachain disulfide couples C172 to C197.

Homodimer; disulfide-linked. As to expression, cerebral peptide 1 is expressed in the cerebral, pedal and buccal ganglia and B1 and B2 neurons. APGW-amide is expressed in buccal ganglia and several neurons.

The protein localises to the secreted. Its function is as follows. May function as a peptide transmitter. The sequence is that of Cerebral peptide 1 from Aplysia californica (California sea hare).